We begin with the raw amino-acid sequence, 635 residues long: MQDDILESEMSKAPQLQQESQEGQDKQTLSPPGHQEPPGIISELDNALPEENQLEKGTMENANGKETLRLESPVLSGFDYQETTGIGTLAQSSSSSSSSLTGFSSWSTAMPPNPSTLIEEVGFFNQAATTNNAPPPLLFQSFSHHTSTGFGGNFSHQIGPLSQHHPSPHPHFQHPHNQHRRSSASPHPPPFSHRSAAFNQLPHLGNNLSKPPSPWGSYQSPSSTPSSTSWSPGGGYGGWGSSQGREYRRGGVNPLNSISPLKKSFPNNQTQTQKYPRNNSGFNTKPWVEDTINRNESIFPFQERSRSFDGFSMHSLENSLIDIMRAEQDSLKGHSSLFPMEDERSYGEDERSDQSLSGLGSPHSFPHQNGERIERYSRKVFVGGLPPDIDEDEITASFRRFGHLFVDWPHKAESKSYFPPKGYAFLLFQDESSVQALIDACMEEDGKLYLCVSSPTIKDKPVQIRPWNLNDSDFVMDGSQPLDPRKTIFVGGVPRPLRAVELAMIMDRLYGGVCYAGIDTDPELKYPKGAGRVAFSNQQSYIAAISARFVQLQHGEIDKRVEVKPYVLDDQLCDECQGTRCGGKFAPFFCANVTCLQYYCEYCWAAIHSRAGREFHKPLVKEGGDRPRHISFRWN.

Disordered stretches follow at residues 1–70, 149–284, and 337–369; these read MQDD…TLRL, GFGG…GFNT, and LFPM…PHQN. Residues 14–30 are compositionally biased toward polar residues; sequence PQLQQESQEGQDKQTLS. The segment covering 166–182 has biased composition (basic residues); that stretch reads PSPHPHFQHPHNQHRRS. A compositionally biased stretch (low complexity) spans 216-231; it reads GSYQSPSSTPSSTSWS. A compositionally biased stretch (gly residues) spans 232–241; sequence PGGGYGGWGS. Residues 254-283 are compositionally biased toward polar residues; it reads PLNSISPLKKSFPNNQTQTQKYPRNNSGFN. Basic and acidic residues predominate over residues 341 to 353; it reads EDERSYGEDERSD. RRM domains follow at residues 378–469 and 486–568; these read RKVF…PWNL and KTIF…PYVL.

The protein belongs to the RRM CPEB family.

The protein resides in the cytoplasm. Its subcellular location is the cell projection. It localises to the dendrite. The protein localises to the dendritic spine. It is found in the postsynaptic density. The protein resides in the axon. Its subcellular location is the growth cone. It localises to the endoplasmic reticulum. The protein localises to the perinuclear region. Sequence-specific RNA-binding protein that binds to the cytoplasmic polyadenylation element (CPE), an uridine-rich sequence element (consensus sequence 5'-UUUUUAU-3') within the mRNA 3'-UTR. RNA binding results in a clear conformational change analogous to the Venus fly trap mechanism. The protein is Cytoplasmic polyadenylation element-binding protein 4 (cpeb4) of Danio rerio (Zebrafish).